A 418-amino-acid polypeptide reads, in one-letter code: Cobalt-zinc-cadmium resistance protein CzcC (418 aa).

An N-terminal signal peptide occupies residues 1–22; the sequence is MRRLFLPLGLAVAFLSPNFAVA.

The protein belongs to the outer membrane factor (OMF) (TC 1.B.17) family.

The protein localises to the cell outer membrane. In terms of biological role, czcC protein appears to modify the specificity of the system, perhaps by acting on the CzcB protein. When the CzcC protein is added to CzcA and CzcB, the efflux system gains specificity for cadmium and cobalt. The chain is Cobalt-zinc-cadmium resistance protein CzcC (czcC) from Cupriavidus metallidurans (strain ATCC 43123 / DSM 2839 / NBRC 102507 / CH34) (Ralstonia metallidurans).